Reading from the N-terminus, the 595-residue chain is Beta-(1--&gt;2)glucan export ATP-binding/permease protein NdvA (595 aa).

In terms of domain architecture, ABC transmembrane type-1 spans 21-301; it reads SLLICSANVM…MSNFINLTIS (281 aa). The next 5 membrane-spanning stretches (helical) occupy residues 22-42, 55-75, 129-149, 152-172, and 248-268; these read LLIC…PILF, IIPT…AYVL, IWLD…VLIP, FNMN…YVLI, and MAST…VAKG. The ABC transporter domain occupies 335–569; sequence IQFHHVTYKF…GGRFYKLLKA (235 aa). An ATP-binding site is contributed by 368 to 375; it reads GPTGAGKT.

The protein belongs to the ABC transporter superfamily. Beta-(1--&gt;2)glucan exporter (TC 3.A.1.108.1) family. Homodimer.

Its subcellular location is the cell inner membrane. The catalysed reaction is [(1-&gt;2)-beta-D-glucosyl](n)(in) + ATP + H2O = [(1-&gt;2)-beta-D-glucosyl](n)(out) + ADP + phosphate + H(+). Functionally, involved in beta-(1--&gt;2)glucan export. Transmembrane domains (TMD) form a pore in the inner membrane and the ATP-binding domain (NBD) is responsible for energy generation. The protein is Beta-(1--&gt;2)glucan export ATP-binding/permease protein NdvA of Bartonella henselae (strain ATCC 49882 / DSM 28221 / CCUG 30454 / Houston 1) (Rochalimaea henselae).